The sequence spans 440 residues: Cyclic dipeptide prenyltransferase (440 aa).

Residues 1-33 (MDGEMTASPPDISACDTSAVDEQTGQSGQSQAP) form a disordered region. Positions 20-32 (VDEQTGQSGQSQA) are enriched in polar residues. 2 residues coordinate substrate: threonine 108 and glutamate 116. 3 residues coordinate dimethylallyl diphosphate: arginine 129, lysine 219, and tyrosine 221. Substrate is bound at residue phenylalanine 223. Residues lysine 286, tyrosine 288, tyrosine 366, tyrosine 431, and tyrosine 435 each coordinate dimethylallyl diphosphate.

Belongs to the tryptophan dimethylallyltransferase family.

The catalysed reaction is harmol + dimethylallyl diphosphate = 6-(3-dimethylallyl)harmol + diphosphate. It catalyses the reaction an N-terminal L-tryptophanyl-L-alpha-aminoacyl-[peptide] + H2O = an N-terminal L-alpha-aminoacyl-[peptide] + L-tryptophan. It carries out the reaction (R)-benzodiazepinedione + dimethylallyl diphosphate = (2S,3R,11R)-aszonalenin + diphosphate. The enzyme catalyses (S)-benzodiazepinedione + dimethylallyl diphosphate = (2S,3R,11S)-aszonalenin + diphosphate. Functionally, prenyltransferase that catalyzes reverse prenylation at position N-1 of tryptophan-containing cyclic dipeptides. Accepts only dimethylallyl diphosphate (DMAPP) as the prenyl donor but shows broad substrate specificities toward its aromatic substrates. Also shows tryptophan aminopeptidase activity with preference for linear peptides containing a tryptophanyl moiety at the N-terminus. This chain is Cyclic dipeptide prenyltransferase, found in Aspergillus fumigatus (Neosartorya fumigata).